The following is a 34-amino-acid chain: Photosystem II reaction center protein T (34 aa).

The chain crosses the membrane as a helical span at residues 3-23 (ALVYTFLLVSTLGIIFFAIFF).

The protein belongs to the PsbT family. PSII is composed of 1 copy each of membrane proteins PsbA, PsbB, PsbC, PsbD, PsbE, PsbF, PsbH, PsbI, PsbJ, PsbK, PsbL, PsbM, PsbT, PsbY, PsbZ, Psb30/Ycf12, at least 3 peripheral proteins of the oxygen-evolving complex and a large number of cofactors. It forms dimeric complexes.

The protein resides in the plastid. The protein localises to the chloroplast thylakoid membrane. Its function is as follows. Found at the monomer-monomer interface of the photosystem II (PS II) dimer, plays a role in assembly and dimerization of PSII. PSII is a light-driven water plastoquinone oxidoreductase, using light energy to abstract electrons from H(2)O, generating a proton gradient subsequently used for ATP formation. This is Photosystem II reaction center protein T from Solanum lycopersicum (Tomato).